The chain runs to 238 residues: 7-cyano-7-deazaguanine synthase (238 aa).

12-22 is an ATP binding site; sequence FSGGQDSTTCL. Residues Cys-191, Cys-200, Cys-203, and Cys-206 each contribute to the Zn(2+) site.

Belongs to the QueC family. The cofactor is Zn(2+).

It carries out the reaction 7-carboxy-7-deazaguanine + NH4(+) + ATP = 7-cyano-7-deazaguanine + ADP + phosphate + H2O + H(+). The protein operates within purine metabolism; 7-cyano-7-deazaguanine biosynthesis. Catalyzes the ATP-dependent conversion of 7-carboxy-7-deazaguanine (CDG) to 7-cyano-7-deazaguanine (preQ(0)). The sequence is that of 7-cyano-7-deazaguanine synthase from Shewanella oneidensis (strain ATCC 700550 / JCM 31522 / CIP 106686 / LMG 19005 / NCIMB 14063 / MR-1).